The primary structure comprises 134 residues: Arsenate reductase (134 aa).

Residues C11, C83, and C90 each act as nucleophile in the active site. 2 disulfide bridges follow: C11–C83 and C83–C90.

It belongs to the low molecular weight phosphotyrosine protein phosphatase family. Thioredoxin-coupled ArsC subfamily.

It localises to the cytoplasm. It carries out the reaction arsenate + [thioredoxin]-dithiol + H(+) = arsenite + [thioredoxin]-disulfide + H2O. Catalyzes the reduction of arsenate [As(V)] to arsenite [As(III)]. This is Arsenate reductase from Bacillus cereus (strain ZK / E33L).